Consider the following 540-residue polypeptide: Putative serine protease F56F10.1 (540 aa).

The N-terminal stretch at 1-16 (MLRNLLLLLLPLLIEA) is a signal peptide. N-linked (GlcNAc...) asparagine glycans are attached at residues N58 and N87. S182 functions as the Charge relay system in the catalytic mechanism. Residues N270, N300, N317, N343, N441, and N449 are each glycosylated (N-linked (GlcNAc...) asparagine). D453 functions as the Charge relay system in the catalytic mechanism. N475 carries N-linked (GlcNAc...) asparagine glycosylation. The active-site Charge relay system is the H479.

The protein belongs to the peptidase S28 family.

The protein is Putative serine protease F56F10.1 of Caenorhabditis elegans.